The primary structure comprises 263 residues: Phosphonates import ATP-binding protein PhnC 1 (263 aa).

The 246-residue stretch at 3–248 (IQVENLWVAF…KEKELYFGEK (246 aa)) folds into the ABC transporter domain. Position 37-44 (37-44 (GPSGAGKS)) interacts with ATP.

It belongs to the ABC transporter superfamily. Phosphonates importer (TC 3.A.1.9.1) family. The complex is composed of two ATP-binding proteins (PhnC), two transmembrane proteins (PhnE) and a solute-binding protein (PhnD).

It is found in the cell inner membrane. The enzyme catalyses phosphonate(out) + ATP + H2O = phosphonate(in) + ADP + phosphate + H(+). In terms of biological role, part of the ABC transporter complex PhnCDE involved in phosphonates import. Responsible for energy coupling to the transport system. The protein is Phosphonates import ATP-binding protein PhnC 1 of Synechococcus sp. (strain JA-2-3B'a(2-13)) (Cyanobacteria bacterium Yellowstone B-Prime).